The sequence spans 348 residues: Dihydroorotase (348 aa).

Zn(2+) is bound by residues histidine 14 and histidine 16. Residues histidine 16 to arginine 18 and asparagine 42 contribute to the substrate site. 3 residues coordinate Zn(2+): lysine 100, histidine 137, and histidine 175. The residue at position 100 (lysine 100) is an N6-carboxylysine. Histidine 137 contributes to the substrate binding site. Leucine 220 serves as a coordination point for substrate. Residue aspartate 248 coordinates Zn(2+). The active site involves aspartate 248. Substrate contacts are provided by histidine 252 and alanine 264.

This sequence belongs to the metallo-dependent hydrolases superfamily. DHOase family. Class II DHOase subfamily. As to quaternary structure, homodimer. The cofactor is Zn(2+).

The catalysed reaction is (S)-dihydroorotate + H2O = N-carbamoyl-L-aspartate + H(+). Its pathway is pyrimidine metabolism; UMP biosynthesis via de novo pathway; (S)-dihydroorotate from bicarbonate: step 3/3. Functionally, catalyzes the reversible cyclization of carbamoyl aspartate to dihydroorotate. The chain is Dihydroorotase from Pseudomonas paraeruginosa (strain DSM 24068 / PA7) (Pseudomonas aeruginosa (strain PA7)).